Consider the following 750-residue polypeptide: MIIRSSEPEVKILVDRDPIKTSFEEWARPGHFSRTIAKGPDTTTWIWNLHADAHDFDSHTSDLEEISRKVFSAHFGQLSIIFLWLSGMYFHGARFSNYEAWLSDPTHIGPSAQVVWPIVGQEILNGDVGGGFRGIQITSGFFQIWRASGITSELQLYCTAIGALVFAALMLFAGWFHYHKAAPKLAWFQDVESMLNHHLAGLLGLGSLSWAGHQVHVSLPINQFLNAGVDPKEIPLPHEFILNRDLLAQLYPSFSEGATPLFTLNWSKYAEFLTFRGGLDPVTGGLWLTDIAHHHLAIAILFLIAGHMYRTNWGIGHDLKEILEAHKGPFTGQGHKGLYEILTTSWHAQLSLNLAMLGSLTIVVAHHMYSMPPYPYLATDYGTQLSLFTHHMWIGAFLIVGAAAHAAIFMVRDYDPTTRYNDLLDRVLRHRDAIISHLNWVCIFLGFHSFGLYIHNDTMSALGRPQDMFSDTAIQLQPVFAQWIQNTHALAPGSTAPGATTGTSLTWGGVDLVAVGGKVALLPIPLGTADFLVHHIHAFTIHVTLLILLKGVLFARSSRLIPDKANLGFRFPCDGPGRGGTCQVSAWDHVFLGLFWMYNAISVVIFHFSWKMQSDVWGSISEQGVVTHITGGNFAQSSITINGWLRDFLWAQASQVIQSYGSSLSAYGLFFLGAHFVWAFSLMFLFSGRGYWQELIESIVWAHNKLKVAPATQPRALSIVQGRAVGVTHYLLGGIATTWAFFLARIIAVG.

The next 8 membrane-spanning stretches (helical) occupy residues 70 to 93 (VFSAHFGQLSIIFLWLSGMYFHGA), 156 to 179 (LYCTAIGALVFAALMLFAGWFHYH), 195 to 219 (LNHHLAGLLGLGSLSWAGHQVHVSL), 291 to 309 (IAHHHLAIAILFLIAGHMY), 346 to 369 (WHAQLSLNLAMLGSLTIVVAHHMY), 385 to 411 (LSLFTHHMWIGAFLIVGAAAHAAIFMV), 433 to 455 (AIISHLNWVCIFLGFHSFGLYIH), and 531 to 549 (FLVHHIHAFTIHVTLLILL). Positions 573 and 582 each coordinate [4Fe-4S] cluster. A run of 2 helical transmembrane segments spans residues 589–610 (HVFLGLFWMYNAISVVIFHFSW) and 664–686 (LSAYGLFFLGAHFVWAFSLMFLF). Histidine 675 contributes to the chlorophyll a' binding site. The chlorophyll a site is built by methionine 683 and tyrosine 691. Tryptophan 692 is a binding site for phylloquinone. A helical membrane pass occupies residues 724–744 (AVGVTHYLLGGIATTWAFFLA).

Belongs to the PsaA/PsaB family. In terms of assembly, the PsaA/B heterodimer binds the P700 chlorophyll special pair and subsequent electron acceptors. PSI consists of a core antenna complex that captures photons, and an electron transfer chain that converts photonic excitation into a charge separation. The eukaryotic PSI reaction center is composed of at least 11 subunits. P700 is a chlorophyll a/chlorophyll a' dimer, A0 is one or more chlorophyll a, A1 is one or both phylloquinones and FX is a shared 4Fe-4S iron-sulfur center. is required as a cofactor.

Its subcellular location is the plastid. It is found in the chloroplast thylakoid membrane. The catalysed reaction is reduced [plastocyanin] + hnu + oxidized [2Fe-2S]-[ferredoxin] = oxidized [plastocyanin] + reduced [2Fe-2S]-[ferredoxin]. Functionally, psaA and PsaB bind P700, the primary electron donor of photosystem I (PSI), as well as the electron acceptors A0, A1 and FX. PSI is a plastocyanin-ferredoxin oxidoreductase, converting photonic excitation into a charge separation, which transfers an electron from the donor P700 chlorophyll pair to the spectroscopically characterized acceptors A0, A1, FX, FA and FB in turn. Oxidized P700 is reduced on the lumenal side of the thylakoid membrane by plastocyanin. The polypeptide is Photosystem I P700 chlorophyll a apoprotein A1 (Pelargonium hortorum (Common geranium)).